Here is a 357-residue protein sequence, read N- to C-terminus: D-alanine--D-alanine ligase A (357 aa).

In terms of domain architecture, ATP-grasp spans 143–348 (KRLLREAGLA…YSKVIDVLIE (206 aa)). 171-226 (AGALGLPFFAKPARQGSSFGVSKVHDRDGFEQAVETALRYDSKALIEEFVDGREIE) serves as a coordination point for ATP. Residues Asp-302, Glu-315, and Asn-317 each coordinate Mg(2+).

Belongs to the D-alanine--D-alanine ligase family. Requires Mg(2+) as cofactor. Mn(2+) is required as a cofactor.

It localises to the cytoplasm. The catalysed reaction is 2 D-alanine + ATP = D-alanyl-D-alanine + ADP + phosphate + H(+). The protein operates within cell wall biogenesis; peptidoglycan biosynthesis. Functionally, cell wall formation. The protein is D-alanine--D-alanine ligase A of Mesorhizobium japonicum (strain LMG 29417 / CECT 9101 / MAFF 303099) (Mesorhizobium loti (strain MAFF 303099)).